Reading from the N-terminus, the 277-residue chain is MALKHFNPTTSGQRQLVIVDRSGLYKGKPVKTLTEGLLSKGGRNNSGKITARFQGGRHKRSYRFIDFKRLKLDVSAKVERLEYDPNRTAFIALIRYEDGQLSYILAPQRLDVGDTVVAGLSVDVKPGNAMPLGNMPVGAIVHNVEMKPGKGGQIARSAGAYAQLVGRDQGMAILRLNSGEQRLVSSNCFATVGAVSNPDHGNINDGKAGRSRWRGKRPHVRGVAMNPVDHPHGGGEGRTSGGRHPVSPWGKPTKGKRTRSNKATDKFIMRSRHQRKK.

The disordered stretch occupies residues 222–277 (GVAMNPVDHPHGGGEGRTSGGRHPVSPWGKPTKGKRTRSNKATDKFIMRSRHQRKK).

Belongs to the universal ribosomal protein uL2 family. Part of the 50S ribosomal subunit. Forms a bridge to the 30S subunit in the 70S ribosome.

One of the primary rRNA binding proteins. Required for association of the 30S and 50S subunits to form the 70S ribosome, for tRNA binding and peptide bond formation. It has been suggested to have peptidyltransferase activity; this is somewhat controversial. Makes several contacts with the 16S rRNA in the 70S ribosome. The chain is Large ribosomal subunit protein uL2 from Bartonella bacilliformis (strain ATCC 35685 / KC583 / Herrer 020/F12,63).